Consider the following 437-residue polypeptide: MPKKVWKSSTPSTYEHISSLRPKFVSRVDNVLHQRKSLTFSNVVVPDKKNNTLTSSVIYSQGSDIYEIDFAVPLQEAASEPVKDYGDAFEGIENTSLSPKFVYQGETVSKMAYLDKTGETTLLSMSKNGSLAWFKEGIKVPIHIVQELMGPATSYASIHSLTRPGDLPEKDFSLAISDFGISNDTETIVKSQSNGDEEDSILKIIDNAGKPGEILRTVHVPGTTVTHTVRFFDNHIFASCSDDNILRFWDTRTSDKPIWVLGEPKNGKLTSFDCSQVSNNLFVTGFSTGIIKLWDARAAEAATTDLTYRQNGEDPIQNEIANFYHAGGDSVVDVQFSATSSSEFFTVGGTGNIYHWNTDYSLSKYNPDDTIAPPQDATEESQTKSLRFLHKGGSRRSPKQIGRRNTAAWHPVIENLVGTVDDDSLVSIYKPYTEESE.

The stretch at 103–144 is one WD 1 repeat; the sequence is YQGETVSKMAYLDKTGETTLLSMSKNGSLAWFKEGIKVPIHI. At Thr-187 the chain carries Phosphothreonine. Position 200 is a phosphoserine (Ser-200). 3 WD repeats span residues 221 to 259, 264 to 304, and 326 to 366; these read PGTTVTHTVRFFDNHIFASCSDDNILRFWDTRTSDKPIW, PKNG…AATT, and AGGD…SKYN. The segment at 368–404 is disordered; that stretch reads DDTIAPPQDATEESQTKSLRFLHKGGSRRSPKQIGRR. Thr-370 bears the Phosphothreonine mark. A compositionally biased stretch (basic residues) spans 387–402; that stretch reads RFLHKGGSRRSPKQIG. Thr-406 carries the post-translational modification Phosphothreonine.

In terms of assembly, interacts with KAP122.

Its subcellular location is the cytoplasm. The protein localises to the nucleus. In terms of biological role, transcriptional modulator with roles in meiotic regulation and silencing. Acts either as an adapter to facilitate nuclear import by KAP122 of the RNR2-RNR4 heterodimer, also called beta-beta' subunit, which corresponds to the small subunit of the ribonucleotide reductase (RNR); or as an anchor to retain RNR2-RNR4 in the nucleus. This is Transcriptional modulator WTM1 (WTM1) from Saccharomyces cerevisiae (strain ATCC 204508 / S288c) (Baker's yeast).